The sequence spans 304 residues: Protein pxr1 (304 aa).

Residues 1–11 (MGLAAPRKKTK) are compositionally biased toward basic residues. Disordered regions lie at residues 1-25 (MGLAAPRKKTKISHDPNNTSWSRST), 144-238 (NATA…DTET), and 256-276 (TSLLASNGPSTSRERQPMGRR). Residues 15-25 (DPNNTSWSRST) are compositionally biased toward polar residues. A G-patch domain is found at 25 to 79 (TDGFGHRILKAQGWTPGDFLGARNATHSDLFTTASASHIRVVLKDDTLGLGARPK). Composition is skewed to basic and acidic residues over residues 154 to 170 (LRVDFPRETSSNEHENG) and 204 to 238 (GKEMDMSPRKSREKKQEKIQKKRKIGDCDRLDTET). Positions 256-266 (TSLLASNGPST) are enriched in polar residues.

The protein belongs to the PINX1 family.

It localises to the nucleus. Its subcellular location is the nucleolus. Its function is as follows. Involved in rRNA-processing at A0, A1 and A2 sites and negatively regulates telomerase. This Aspergillus fumigatus (strain ATCC MYA-4609 / CBS 101355 / FGSC A1100 / Af293) (Neosartorya fumigata) protein is Protein pxr1 (pxr1).